The primary structure comprises 219 residues: Redox-sensing transcriptional repressor Rex (219 aa).

The segment at residues 17 to 56 (VYLRVLDNLVKRDIEVVSSKSLSKETGFTAEQIRKDLAFF) is a DNA-binding region (H-T-H motif). 91 to 96 (GAGHLG) contacts NAD(+).

This sequence belongs to the transcriptional regulatory Rex family. Homodimer.

The protein localises to the cytoplasm. In terms of biological role, modulates transcription in response to changes in cellular NADH/NAD(+) redox state. The protein is Redox-sensing transcriptional repressor Rex of Natranaerobius thermophilus (strain ATCC BAA-1301 / DSM 18059 / JW/NM-WN-LF).